We begin with the raw amino-acid sequence, 236 residues long: Phosphoribosylaminoimidazole-succinocarboxamide synthase (236 aa).

This sequence belongs to the SAICAR synthetase family.

It carries out the reaction 5-amino-1-(5-phospho-D-ribosyl)imidazole-4-carboxylate + L-aspartate + ATP = (2S)-2-[5-amino-1-(5-phospho-beta-D-ribosyl)imidazole-4-carboxamido]succinate + ADP + phosphate + 2 H(+). It functions in the pathway purine metabolism; IMP biosynthesis via de novo pathway; 5-amino-1-(5-phospho-D-ribosyl)imidazole-4-carboxamide from 5-amino-1-(5-phospho-D-ribosyl)imidazole-4-carboxylate: step 1/2. The chain is Phosphoribosylaminoimidazole-succinocarboxamide synthase from Pseudomonas aeruginosa (strain LESB58).